Here is an 82-residue protein sequence, read N- to C-terminus: Small ribosomal subunit protein uS17 (82 aa).

The protein belongs to the universal ribosomal protein uS17 family. In terms of assembly, part of the 30S ribosomal subunit.

One of the primary rRNA binding proteins, it binds specifically to the 5'-end of 16S ribosomal RNA. This Shewanella denitrificans (strain OS217 / ATCC BAA-1090 / DSM 15013) protein is Small ribosomal subunit protein uS17.